The chain runs to 1696 residues: PH domain leucine-rich repeat protein phosphatase 1 (1696 aa).

At Met1 the chain carries N-acetylmethionine. 2 disordered regions span residues 1–97 and 222–398; these read MEPA…GGGA and LGHG…VVGE. The span at 79-92 shows a compositional bias: low complexity; that stretch reads VPQPAAGGAAPVTA. Residues 313-325 are compositionally biased toward polar residues; sequence DTESFSLSPSAES. Ser378 is subject to Phosphoserine. The PH domain maps to 499 to 599; it reads RIQLSGMYNV…WLRQVSKVAS (101 aa). 18 LRR repeats span residues 601-622, 624-645, 655-676, 678-699, 701-722, 724-746, 836-857, 858-879, 881-902, 904-925, 926-947, 950-971, 976-996, 1000-1021, 1024-1045, 1047-1068, 1069-1090, and 1092-1113; these read RISSVDLSCCSLEHLPANLFYS, DLTHLNLKQNFLRQNPSLPAAR, KLKSLNLSNNHLGAFPSAVCSI, TLAELNVSCNALQEVPAAVGAM, NLQTFLLDGNFLQSLPAELENM, QLSYLGLSFNEFTDIPEVLEKLT, FLKALYASSNELVQLDVYPVPN, YLSYMDVSRNCLESVPEWVCES, KLEVLDIGHNQICELPARLFCN, SLRKLLAGHNRLARLPERLERT, SVEVLDVQHNQIIELPPNLLMK, SLRFLNASANKLETLPPATLSE, ILQELYLTNNSLTDKCVPLLT, RLKILHMAYNRLQSFPASKMAK, ELEEIDISGNKLKAIPTTIMNC, RMHTVIAHSNCIEVFPEVMQLP, EVKCVDLSCNELSEITLPENLP, and KLQELDLTGNPRLALDHKSLEL. A PPM-type phosphatase domain is found at 1138–1385; the sequence is SHGYTEASGV…DSISAVVVQL (248 aa). Asp1173, Gly1174, Lys1337, and Asp1376 together coordinate Mn(2+). Disordered regions lie at residues 1422–1473 and 1610–1696; these read RPSD…SPAY and KPGG…DTPL. 3 stretches are compositionally biased toward low complexity: residues 1431–1452, 1647–1660, and 1670–1680; these read SSSSGMASEISSELSTSEMSSE, QQQQQQQQQQQQQQ, and QAQAQAQAQAQ. The PDZ-binding motif lies at 1694 to 1696; it reads TPL.

In terms of assembly, interacts with the nucleotide free form of K-Ras (KRAS) via its LRR repeats. Interacts with AKT2, AKT3 and PRKCB isoform beta-II. Interacts with WDR48 and USP12. Mn(2+) is required as a cofactor. As to expression, mainly present in brain (at protein level). Isoform 2 is more abundant in adult brain neurons than isoform 1 in. Isoforms 1 and 2 are expressed in the retina but not found in rod outer segments.

It is found in the cytoplasm. It localises to the membrane. Its subcellular location is the cell membrane. The protein resides in the nucleus. The protein localises to the nucleoplasm. It is found in the nucleus membrane. The catalysed reaction is O-phospho-L-seryl-[protein] + H2O = L-seryl-[protein] + phosphate. It catalyses the reaction O-phospho-L-threonyl-[protein] + H2O = L-threonyl-[protein] + phosphate. Insensitive to okadaic acid. Deubiquitination by WDR48-USP12 complex positively regulates PHLPP1 stability. Protein phosphatase involved in regulation of Akt and PKC signaling. Mediates dephosphorylation in the C-terminal domain hydrophobic motif of members of the AGC Ser/Thr protein kinase family; specifically acts on 'Ser-473' of AKT2 and AKT3, 'Ser-660' of PRKCB and 'Ser-657' of PRKCA. Isoform 2 seems to have a major role in regulating Akt signaling in hippocampal neurons while isoform 1 may promote Akt and PKC activation and inhibit ERK signaling. Akt regulates the balance between cell survival and apoptosis through a cascade that primarily alters the function of transcription factors that regulate pro- and antiapoptotic genes. Dephosphorylation of 'Ser-473' of Akt triggers apoptosis and suppression of tumor growth. Dephosphorylation of PRKCA and PRKCB leads to their destabilization and degradation. Dephosphorylates STK4 on 'Thr-387' leading to STK4 activation and apoptosis. Dephosphorylates RPS6KB1 and is involved in regulation of cap-dependent translation. Inhibits cancer cell proliferation and may act as a tumor suppressor. Dephosphorylates RAF1 inhibiting its kinase activity. May act as a negative regulator of K-Ras signaling in membrane rafts. Involved in the hippocampus-dependent long-term memory formation. Involved in circadian control by regulating the consolidation of circadian periodicity after resetting. Involved in development and function of regulatory T-cells. The polypeptide is PH domain leucine-rich repeat protein phosphatase 1 (Phlpp1) (Rattus norvegicus (Rat)).